A 125-amino-acid polypeptide reads, in one-letter code: Large ribosomal subunit protein bL12 (125 aa).

The protein belongs to the bacterial ribosomal protein bL12 family. In terms of assembly, homodimer. Part of the ribosomal stalk of the 50S ribosomal subunit. Forms a multimeric L10(L12)X complex, where L10 forms an elongated spine to which 2 to 4 L12 dimers bind in a sequential fashion. Binds GTP-bound translation factors.

Its function is as follows. Forms part of the ribosomal stalk which helps the ribosome interact with GTP-bound translation factors. Is thus essential for accurate translation. The protein is Large ribosomal subunit protein bL12 of Parabacteroides distasonis (strain ATCC 8503 / DSM 20701 / CIP 104284 / JCM 5825 / NCTC 11152).